The following is a 92-amino-acid chain: Small ribosomal subunit protein bS20 (92 aa).

Residues 1–25 (MANSAQARKRARQAAKANSHNSALR) are disordered.

Belongs to the bacterial ribosomal protein bS20 family.

Its function is as follows. Binds directly to 16S ribosomal RNA. In Paraburkholderia phymatum (strain DSM 17167 / CIP 108236 / LMG 21445 / STM815) (Burkholderia phymatum), this protein is Small ribosomal subunit protein bS20.